The sequence spans 137 residues: Small ribosomal subunit protein uS12 (137 aa).

The disordered stretch occupies residues 1-55 (MPTINQLVRKPRKSKTKQSDSPALNRGFNSKKKQFTNLNSPQKRGVCTRVGTMTP). 3-methylthioaspartic acid is present on D102. The tract at residues 118 to 137 (SGVDGRRQGRSLYGTKKPKN) is disordered.

It belongs to the universal ribosomal protein uS12 family. Part of the 30S ribosomal subunit. Contacts proteins S8 and S17. May interact with IF1 in the 30S initiation complex.

In terms of biological role, with S4 and S5 plays an important role in translational accuracy. Its function is as follows. Interacts with and stabilizes bases of the 16S rRNA that are involved in tRNA selection in the A site and with the mRNA backbone. Located at the interface of the 30S and 50S subunits, it traverses the body of the 30S subunit contacting proteins on the other side and probably holding the rRNA structure together. The combined cluster of proteins S8, S12 and S17 appears to hold together the shoulder and platform of the 30S subunit. This is Small ribosomal subunit protein uS12 from Staphylococcus epidermidis (strain ATCC 35984 / DSM 28319 / BCRC 17069 / CCUG 31568 / BM 3577 / RP62A).